Reading from the N-terminus, the 1408-residue chain is MKALLDLFKQVTQKEEFDSIKIGLASPEKIRSWSYGEVKKPETINYRTFKPERDGLFCAKIFGPVKDYECLCGKYKRLKHRGVICEKCGVEVTLSKVRRERMGHIELASPVAHIWFLKSLPSRLGMVLDMTLRDIERVLYFEAYVVTDPGLTPLQRCQLLTDDDYRAKTEEYGDDFRASMGAEGIRDLLNTLNIRVEIDDLRREMGTTGSETKMKKISKRLKVLEAFSKSGIKPEWMILAVLPVLPPELRPLVPLDGGRFATSDLNDLYRRVINRNNRLKRLLELKAPEIIVRNEKRMLQEAVDSLLDNGRRGKAMTGANKRPLKSLADMIKGKGGRFRQNLLGKRVDYSGRSVIVVGPQLKLHQCGLPKKMALELFKPFIFNKLEIMGIASTIKAAKREVENESPIVWDILEDVIREHPVMLNRAPTLHRLGIQAFEPVLIEGKAIQLHPLVCAAFNADFDGDQMAVHVPLSLEAQMECRTLMMSTNNVLSPANGEPIIVPSQDIVLGLYYTTREKVNARGEGMYFANISEVSRAYENRVIELNARIFVRIREYELADGERREKITRYETTVGRALLSEILPAGLPFPLINKVLKKKEISKLINASFRRCGLRETVIFADKLMYAGFSYATRAGISICLDDMLTPAQKDAIISASEKEVQEIELQYTSGLVTQGERYNKVVDIWGRAGDQVAKAMMDQLGVEPIIDPETGTAKTGESGKPLIQESFNSIYMMADSGARGSAAQIRQLAGMRGLMAKPDGSIIETPITANFREGLNVLQYFISTHGARKGLADTALKTANSGYLTRRLVDVTQDLVVTQEDCGTSNGVVMKALVEGGEVIEALRERILGRVVANDIINPEHQAVIYPAGMLLDENAVDTIEMLGIDEVKVRTPLTCETRYGLCAKCYGRDLGRGTPVNVGEAVGVIAAQSIGEPGTQLTMRTFHIGGAASRTAVASQVESKSNGIVRYSPTMRYVTNARNELIAISRSGEVVIQDDNGRERERHKAPYGATLLIRDGEVVKAGQVLAAWDPHTRPIITEYSGKVRFENVEEGVTVAKQIDEVTGLSTLVVIDPKRRGVVQTKGLRPVVKLLDEEGKEVRLAGSNLPVHITFQVGSIITVRDGQQVSVGEVLARIPQESSKTRDITGGLPRVAELFEARSPKDAGVLAEVTGIVSFGKDTKGKQRLVITDLDGVSHEYLIPKDKHVTAHDGQVVNKGESIVDGPADPHDILRLLGVEALARYITDEVQDVYRLQGVKINDKHIEVIVRQMLRRVQIVDSGDTRFIPGEQVERAEMLAENEQVELEGKRPATYEYMLLGITKASLSTDSFISAASFQETTRVLTEAAIMGKKDDLRGLKENVIVGRLIPAGTGLTFHNTRKRQRLMLDTGEAPPLSEEETGEIRNSGYAV.

The Zn(2+) site is built by C70, C72, C85, and C88. The Mg(2+) site is built by D460, D462, and D464. Zn(2+) is bound by residues C822, C896, C903, and C906. Residues 1386 to 1408 (DTGEAPPLSEEETGEIRNSGYAV) are disordered.

The protein belongs to the RNA polymerase beta' chain family. In terms of assembly, the RNAP catalytic core consists of 2 alpha, 1 beta, 1 beta' and 1 omega subunit. When a sigma factor is associated with the core the holoenzyme is formed, which can initiate transcription. Requires Mg(2+) as cofactor. It depends on Zn(2+) as a cofactor.

It carries out the reaction RNA(n) + a ribonucleoside 5'-triphosphate = RNA(n+1) + diphosphate. Functionally, DNA-dependent RNA polymerase catalyzes the transcription of DNA into RNA using the four ribonucleoside triphosphates as substrates. The chain is DNA-directed RNA polymerase subunit beta' from Nitrosospira multiformis (strain ATCC 25196 / NCIMB 11849 / C 71).